We begin with the raw amino-acid sequence, 357 residues long: Low-salt glycan biosynthesis nucleotidyltransferase Agl11 (357 aa).

Mg(2+) is bound by residues aspartate 108 and aspartate 221.

Belongs to the glucose-1-phosphate thymidylyltransferase family. Mg(2+) is required as a cofactor.

It participates in protein modification; protein glycosylation. It functions in the pathway cell surface structure biogenesis; S-layer biogenesis. In terms of biological role, nucleotidyltransferase involved in N-glycan biosynthetic pathway that takes place under low-salt conditions (1.75 M instead of 3.4 M). Participates in the formation of the tetrasaccharide present at 'Asn-532' of S-layer glycoprotein Csg, consisting of a sulfated hexose, 2 hexoses and rhamnose. Involved in the addition of final rhamnose (sugar 4) of the tetrasaccharide on the dolichol phosphate carrier. This chain is Low-salt glycan biosynthesis nucleotidyltransferase Agl11 (agl11), found in Haloferax volcanii (strain ATCC 29605 / DSM 3757 / JCM 8879 / NBRC 14742 / NCIMB 2012 / VKM B-1768 / DS2) (Halobacterium volcanii).